The primary structure comprises 425 residues: 2-methylserine hydroxymethyltransferase (425 aa).

(6S)-5,6,7,8-tetrahydrofolate contacts are provided by residues Leu126 and 130-132 (GHL). Residue Lys235 is modified to N6-(pyridoxal phosphate)lysine. Glu251 is a (6S)-5,6,7,8-tetrahydrofolate binding site.

The protein belongs to the SHMT family. As to quaternary structure, homodimer. The cofactor is pyridoxal 5'-phosphate.

It is found in the cytoplasm. The enzyme catalyses (6R)-5,10-methylene-5,6,7,8-tetrahydrofolate + D-alanine + H2O = 2-methylserine + (6S)-5,6,7,8-tetrahydrofolate. It participates in one-carbon metabolism; tetrahydrofolate interconversion. Its activity is regulated as follows. Inhibited by hydroxylamine and sodium borohydride. Functionally, catalyzes the reversible interconversion of alpha-methyl-L-serine to D-alanine with tetrahydrofolate (THF) serving as the one-carbon carrier. Cannot use alpha-methyl-D-serine, L-serine, D-serine or L-alanine. The polypeptide is 2-methylserine hydroxymethyltransferase (Paracoccus sp).